The primary structure comprises 271 residues: Small ribosomal subunit protein uS3 (271 aa).

In terms of domain architecture, KH type-2 spans 40–108 (IRKFLKKRLY…TIIVNIVEVR (69 aa)). The disordered stretch occupies residues 210-271 (PTRDGVNPRE…RPQRTENKGN (62 aa)). A compositionally biased stretch (basic and acidic residues) spans 215–247 (VNPREESRKSDRRDNKRDNRRNDRRGNDRRGND).

This sequence belongs to the universal ribosomal protein uS3 family. As to quaternary structure, part of the 30S ribosomal subunit. Forms a tight complex with proteins S10 and S14.

Its function is as follows. Binds the lower part of the 30S subunit head. Binds mRNA in the 70S ribosome, positioning it for translation. This is Small ribosomal subunit protein uS3 from Clostridioides difficile (strain 630) (Peptoclostridium difficile).